The chain runs to 216 residues: Homeobox-leucine zipper protein ATHB-40 (216 aa).

Positions 28-52 (GEVKQPKRRRKKTKGSVASADGGNG) are disordered. The segment at residues 52-111 (GLFRKRKLTDEQVNMLEMSFGDEHKLESERKDRLAAELGLDPRQVAVWFQNRRARWKNKR) is a DNA-binding region (homeobox). The tract at residues 112–140 (LEEEYNKLKNSHDNVVVDKCRLESEVIQL) is leucine-zipper.

The protein belongs to the HD-ZIP homeobox family. Class I subfamily. Expressed in roots, flowers and siliques.

The protein localises to the nucleus. Its function is as follows. Probable transcription factor. The chain is Homeobox-leucine zipper protein ATHB-40 (ATHB-40) from Arabidopsis thaliana (Mouse-ear cress).